Consider the following 137-residue polypeptide: Large ribosomal subunit protein uL16 (137 aa).

Positions 1 to 17 (MLSPKRTKFRKQQRGRM) are enriched in basic residues. The interval 1 to 24 (MLSPKRTKFRKQQRGRMRGNANSG) is disordered.

It belongs to the universal ribosomal protein uL16 family. Part of the 50S ribosomal subunit.

Its function is as follows. Binds 23S rRNA and is also seen to make contacts with the A and possibly P site tRNAs. In Trichodesmium erythraeum (strain IMS101), this protein is Large ribosomal subunit protein uL16.